The primary structure comprises 49 residues: Large ribosomal subunit protein bL33 (49 aa).

The protein belongs to the bacterial ribosomal protein bL33 family.

The protein is Large ribosomal subunit protein bL33 (rpmG) of Thermotoga maritima (strain ATCC 43589 / DSM 3109 / JCM 10099 / NBRC 100826 / MSB8).